An 869-amino-acid chain; its full sequence is Leucine--tRNA ligase (869 aa).

A 'HIGH' region motif is present at residues 51 to 61; it reads PYPSGRIHMGH. A 'KMSKS' region motif is present at residues 636-640; the sequence is KMSKS. An ATP-binding site is contributed by Lys639.

It belongs to the class-I aminoacyl-tRNA synthetase family.

The protein resides in the cytoplasm. It carries out the reaction tRNA(Leu) + L-leucine + ATP = L-leucyl-tRNA(Leu) + AMP + diphosphate. This Dinoroseobacter shibae (strain DSM 16493 / NCIMB 14021 / DFL 12) protein is Leucine--tRNA ligase.